A 434-amino-acid polypeptide reads, in one-letter code: MDYLDLGPYSSASGTVRLPGSKSISNRVLLLAALAEGDTTITNLLDSDDTRVMLDALGKLGVKLARDGDTCVVTGTRGAFTAKTADLFLGNAGTAVRPLTAALAINGGDYRVHGVPRMHERPIGDLVDGLRQIGAQIDYEQNEGFPPLRIRPATISVDAPIRVRGDVSSQFLTALLMTLPLVKAKDGRSIVEIDGELISKPYIDITIRLMARFGVNVEREGWQRFTVPAGVRYRSPGRIMVEGDASSASYFLAAGALGGGPLRVEGVGRASIQGDVGFAHALMQMGANVTMGDDWIEVRGIGHDHGKLEPIDMDFNLIPDAAMTIAVAALFANGTSTLRNIASWRVKETDRIAAMATELRKVGATVEEGADYLVVTPPAALTPNAAIDTYDDHRMAMCFSLVSLGGVPVRINDPKCVGKTFPDYFDRFAALAKA.

3 residues coordinate 3-phosphoshikimate: K22, S23, and R27. Residue K22 coordinates phosphoenolpyruvate. Phosphoenolpyruvate contacts are provided by G93 and R121. Residues S168, S169, Q170, S199, D320, and K347 each contribute to the 3-phosphoshikimate site. Q170 lines the phosphoenolpyruvate pocket. The active-site Proton acceptor is D320. Phosphoenolpyruvate is bound by residues R351, R394, and K419.

This sequence belongs to the EPSP synthase family. In terms of assembly, monomer.

Its subcellular location is the cytoplasm. The enzyme catalyses 3-phosphoshikimate + phosphoenolpyruvate = 5-O-(1-carboxyvinyl)-3-phosphoshikimate + phosphate. It participates in metabolic intermediate biosynthesis; chorismate biosynthesis; chorismate from D-erythrose 4-phosphate and phosphoenolpyruvate: step 6/7. Its function is as follows. Catalyzes the transfer of the enolpyruvyl moiety of phosphoenolpyruvate (PEP) to the 5-hydroxyl of shikimate-3-phosphate (S3P) to produce enolpyruvyl shikimate-3-phosphate and inorganic phosphate. The polypeptide is 3-phosphoshikimate 1-carboxyvinyltransferase (Burkholderia multivorans (strain ATCC 17616 / 249)).